Here is a 626-residue protein sequence, read N- to C-terminus: 4-hydroxy-3-methylbut-2-en-1-yl diphosphate synthase (flavodoxin) (626 aa).

[4Fe-4S] cluster is bound by residues C521, C524, C555, and E562.

It belongs to the IspG family. The cofactor is [4Fe-4S] cluster.

The catalysed reaction is (2E)-4-hydroxy-3-methylbut-2-enyl diphosphate + oxidized [flavodoxin] + H2O + 2 H(+) = 2-C-methyl-D-erythritol 2,4-cyclic diphosphate + reduced [flavodoxin]. It functions in the pathway isoprenoid biosynthesis; isopentenyl diphosphate biosynthesis via DXP pathway; isopentenyl diphosphate from 1-deoxy-D-xylulose 5-phosphate: step 5/6. Functionally, converts 2C-methyl-D-erythritol 2,4-cyclodiphosphate (ME-2,4cPP) into 1-hydroxy-2-methyl-2-(E)-butenyl 4-diphosphate. The protein is 4-hydroxy-3-methylbut-2-en-1-yl diphosphate synthase (flavodoxin) of Bacteroides fragilis (strain YCH46).